The primary structure comprises 330 residues: GTPase Obg (330 aa).

The 159-residue stretch at Met-1–Leu-159 folds into the Obg domain. Positions Ser-160–Lys-327 constitute an OBG-type G domain. Residues Gly-166–Ser-173, Phe-191–Val-195, Asp-212–Gly-215, Asn-279–Asp-282, and Ser-308–Tyr-310 contribute to the GTP site. The Mg(2+) site is built by Ser-173 and Thr-193.

It belongs to the TRAFAC class OBG-HflX-like GTPase superfamily. OBG GTPase family. As to quaternary structure, monomer. Requires Mg(2+) as cofactor.

The protein localises to the cytoplasm. An essential GTPase which binds GTP, GDP and possibly (p)ppGpp with moderate affinity, with high nucleotide exchange rates and a fairly low GTP hydrolysis rate. Plays a role in control of the cell cycle, stress response, ribosome biogenesis and in those bacteria that undergo differentiation, in morphogenesis control. This Rickettsia akari (strain Hartford) protein is GTPase Obg.